Consider the following 199-residue polypeptide: Small ribosomal subunit protein mS38 (199 aa).

Belongs to the mitochondrion-specific ribosomal protein mS38 family. As to quaternary structure, component of the mitochondrial small ribosomal subunit (mt-SSU). Mature mammalian 55S mitochondrial ribosomes consist of a small (28S) and a large (39S) subunit. The 28S small subunit contains a 12S ribosomal RNA (12S mt-rRNA) and 30 different proteins. The 39S large subunit contains a 16S rRNA (16S mt-rRNA), a copy of mitochondrial valine transfer RNA (mt-tRNA(Val)), which plays an integral structural role, and 52 different proteins. Interacts with Aurora-A. As to expression, ubiquitously expressed and especially highly expressed in heart, skeletal muscle and testis.

The protein localises to the mitochondrion matrix. It localises to the nucleus. May act as a negative regulator of Aurora-A kinase, by down-regulation through proteasome-dependent degradation. This chain is Small ribosomal subunit protein mS38 (AURKAIP1), found in Homo sapiens (Human).